A 466-amino-acid chain; its full sequence is Putative chitinase (466 aa).

The signal sequence occupies residues 1-17; sequence MYLTIWLVSILALGTWG. In terms of domain architecture, GH18 spans 20 to 380; that stretch reads FNRFCHYNSW…MAVIHGLNAY (361 aa). A disulfide bridge connects residues Cys-24 and Cys-49. The Proton donor role is filled by Glu-141. The stretch at 408–442 forms a coiled coil; the sequence is NYRRRNQQEKVAEMEQRIRHLEQELQQSMGNMAYE.

It belongs to the glycosyl hydrolase 18 family. In terms of tissue distribution, prismatic layer of shell (at protein level). Expressed primarily in the mantle with highest level in the mantle edge and lower level in the mantle pallium.

The protein resides in the secreted. The enzyme catalyses Random endo-hydrolysis of N-acetyl-beta-D-glucosaminide (1-&gt;4)-beta-linkages in chitin and chitodextrins.. This chain is Putative chitinase, found in Pinctada maxima (Silver-lipped pearl oyster).